Reading from the N-terminus, the 221-residue chain is Chalcone--flavanone isomerase (221 aa).

Threonine 47, asparagine 112, and serine 189 together coordinate substrate.

The protein belongs to the chalcone isomerase family.

It catalyses the reaction a chalcone = a flavanone.. It functions in the pathway secondary metabolite biosynthesis; flavonoid biosynthesis. Functionally, catalyzes the intramolecular cyclization of bicyclic chalcones into tricyclic (S)-flavanones. Responsible for the isomerization of 4,2',4',6'-tetrahydroxychalcone (also termed chalcone) into naringenin. The sequence is that of Chalcone--flavanone isomerase (CHI) from Dianthus caryophyllus (Carnation).